Reading from the N-terminus, the 156-residue chain is Endoribonuclease YbeY (156 aa).

Zn(2+) is bound by residues His-122, His-126, and His-132.

This sequence belongs to the endoribonuclease YbeY family. Zn(2+) is required as a cofactor.

The protein resides in the cytoplasm. Functionally, single strand-specific metallo-endoribonuclease involved in late-stage 70S ribosome quality control and in maturation of the 3' terminus of the 16S rRNA. This is Endoribonuclease YbeY from Geobacillus kaustophilus (strain HTA426).